The primary structure comprises 853 residues: DNA mismatch repair protein MutS (853 aa).

Residue 614-621 coordinates ATP; it reads GPNMGGKS.

It belongs to the DNA mismatch repair MutS family.

Its function is as follows. This protein is involved in the repair of mismatches in DNA. It is possible that it carries out the mismatch recognition step. This protein has a weak ATPase activity. This Shigella dysenteriae serotype 1 (strain Sd197) protein is DNA mismatch repair protein MutS.